The sequence spans 164 residues: Protein-export protein SecB (164 aa).

The protein belongs to the SecB family. As to quaternary structure, homotetramer, a dimer of dimers. One homotetramer interacts with 1 SecA dimer.

The protein resides in the cytoplasm. Its function is as follows. One of the proteins required for the normal export of preproteins out of the cell cytoplasm. It is a molecular chaperone that binds to a subset of precursor proteins, maintaining them in a translocation-competent state. It also specifically binds to its receptor SecA. The protein is Protein-export protein SecB of Nitrosococcus oceani (strain ATCC 19707 / BCRC 17464 / JCM 30415 / NCIMB 11848 / C-107).